Reading from the N-terminus, the 43-residue chain is Disintegrin CV (43 aa).

Cystine bridges form between C1/C10, C6/C29, C7/C34, and C19/C36. The Disintegrin domain occupies 1-43 (CTTGPCCRQCKLKPAGTTCWRTSVSSHYCTGRSCECPSYPGNG). A Cell attachment site; atypical (RTS) motif is present at residues 21 to 23 (RTS).

Belongs to the disintegrin family. Short disintegrin subfamily. As to quaternary structure, monomer. As to expression, expressed by the venom gland.

It localises to the secreted. In terms of biological role, specifically interacts with the alpha-1/beta-1 integrin (ITGA1/ITGB1). Exhibits highly inhibitory effects on cell adhesion and cell migration to collagens I and IV. Also shows in vivo anti-angiogenic activity. The polypeptide is Disintegrin CV (Cerastes vipera (Sahara sand viper)).